Consider the following 427-residue polypeptide: Trigger factor (427 aa).

Positions 163-248 constitute a PPIase FKBP-type domain; it reads GDTVVIDFVG…IHEVKAKEVP (86 aa).

Belongs to the FKBP-type PPIase family. Tig subfamily.

The protein resides in the cytoplasm. The enzyme catalyses [protein]-peptidylproline (omega=180) = [protein]-peptidylproline (omega=0). In terms of biological role, involved in protein export. Acts as a chaperone by maintaining the newly synthesized protein in an open conformation. Functions as a peptidyl-prolyl cis-trans isomerase. This Streptococcus pneumoniae (strain Hungary19A-6) protein is Trigger factor.